We begin with the raw amino-acid sequence, 1048 residues long: Ceruloplasmin (1048 aa).

The signal sequence occupies residues 1–19; it reads MKIFLLCIFLILCGTSVWA. Plastocyanin-like domains follow at residues 20–200, 209–357, and 370–554; these read KDKH…LIHC, KEKN…VQDC, and NVRH…MKIC. Residues Tyr55, Gly64, and Tyr67 each coordinate Na(+). 2 residues coordinate Cu(2+): His120 and His122. His120 contacts O2. A Ca(2+)-binding site is contributed by Lys128. Asn138 carries N-linked (GlcNAc...) asparagine glycosylation. Gln143, Asp146, and Asp147 together coordinate Ca(2+). A disulfide bridge connects residues Cys174 and Cys200. His180 and His182 together coordinate Cu(2+). His180 is a binding site for O2. N-linked (GlcNAc...) asparagine glycosylation is present at Asn227. Ser256 serves as a coordination point for Na(+). Cysteines 276 and 357 form a disulfide. Cu(2+) contacts are provided by His295, Cys338, and His343. Na(+) is bound by residues Phe408, Gly417, and Tyr420. A disulfide bond links Cys530 and Cys554. Residues Asn556 and Asn582 are each glycosylated (N-linked (GlcNAc...) asparagine). In terms of domain architecture, Plastocyanin-like 4 spans 564–712; the sequence is RLKNVDKEFY…MKQKYTVSQC (149 aa). Ser611 is a binding site for Na(+). Cys631 and Cys712 are joined by a disulfide. Residues His650, Cys693, His698, and Met703 each coordinate Cu(2+). Cys693 (nucleophile; for glutathione peroxidase activity) is an active-site residue. A Phosphoserine modification is found at Ser716. 2 Plastocyanin-like domains span residues 724–894 and 902–1044; these read GERT…LIVC and SNPI…PNEE. Asn756 carries an N-linked (GlcNAc...) asparagine glycan. 3 residues coordinate Na(+): Phe761, Gly770, and Tyr773. Cysteines 868 and 894 form a disulfide. Asn920 carries N-linked (GlcNAc...) asparagine glycosylation. Ser949 lines the Na(+) pocket. His977, His980, His982, His1022, Cys1023, His1024, His1028, and Met1033 together coordinate Cu(2+). O2 contacts are provided by His980 and His982. His1024 serves as a coordination point for O2.

This sequence belongs to the multicopper oxidase family. In terms of assembly, found in a complex with MPO and LTF; interacts directly with MPO and LTF, which allows Fe(3+) incorporation into LTF, activation of CP ferroxidase activity and protection of CP antioxidant properties by MPO. Cu(2+) is required as a cofactor. As to expression, expressed by the liver and secreted in plasma. Also expressed in the hypothalamus, spleen and uterus. No expression in the cortex, heart, intestine or kidney.

The protein resides in the secreted. It catalyses the reaction 4 Fe(2+) + O2 + 4 H(+) = 4 Fe(3+) + 2 H2O. It carries out the reaction 4 Cu(+) + O2 + 4 H(+) = 4 Cu(2+) + 2 H2O. The enzyme catalyses a hydroperoxide + 2 glutathione = an alcohol + glutathione disulfide + H2O. The catalysed reaction is 4 nitric oxide + O2 + 2 H2O = 4 nitrite + 4 H(+). It catalyses the reaction 2 glutathione + H2O2 = glutathione disulfide + 2 H2O. Its function is as follows. Multifunctional blue, copper-binding (6-7 atoms per molecule) glycoprotein. It has ferroxidase activity oxidizing Fe(2+) to Fe(3+) without releasing radical oxygen species. It is involved in iron transport across the cell membrane. Copper ions provide a large number of enzymatic activites. Oxidizes highly toxic ferrous ions to the ferric state for further incorporation onto apo-transferrins, catalyzes Cu(+) oxidation and promotes the oxidation of biogenic amines such as norepinephrin and serotonin. Provides Cu(2+) ions for the ascorbate-mediated deaminase degradation of the heparan sulfate chains of GPC1. Has glutathione peroxidase-like activity, can remove both hydrogen peroxide and lipid hydroperoxide in the presence of thiols. Also shows NO-oxidase and NO2 synthase activities that determine endocrine NO homeostasis. The sequence is that of Ceruloplasmin (CP) from Ovis aries (Sheep).